Consider the following 417-residue polypeptide: Testis-specific Y-encoded-like protein 5 (417 aa).

The segment covering 1-25 has biased composition (basic residues); that stretch reads MSGRSRGRKSSRAKNRGKGRAKARV. Disordered stretches follow at residues 1–55, 93–112, 127–202, and 391–417; these read MSGR…QVQA, AAGD…AASL, GTVG…EGSM, and KGKE…SQSN. The segment covering 27 to 37 has biased composition (basic and acidic residues); the sequence is PAPDDAPRDPD. Residues 93 to 103 are compositionally biased toward low complexity; sequence AAGDHGQAAAR. Residues 182-191 are compositionally biased toward basic and acidic residues; the sequence is GEEKKEERDA. A compositionally biased stretch (polar residues) spans 406–417; the sequence is METTQPGVSQSN.

Belongs to the nucleosome assembly protein (NAP) family. Interacts with USP7.

Its function is as follows. Involved in modulation of cell growth and cellular response to gamma radiation probably via regulation of the Akt signaling pathway. Involved in regulation of p53/TP53. Suppresses p53/TP53 protein levels and promotes its ubiquitination; the function is dependent on USP7 and independent on MDM2. Proposed to displace p53/TP53 from interaction with USP7. The protein is Testis-specific Y-encoded-like protein 5 (TSPYL5) of Homo sapiens (Human).